Here is a 620-residue protein sequence, read N- to C-terminus: Chaperone protein HscA homolog (620 aa).

This sequence belongs to the heat shock protein 70 family.

In terms of biological role, chaperone involved in the maturation of iron-sulfur cluster-containing proteins. Has a low intrinsic ATPase activity which is markedly stimulated by HscB. The chain is Chaperone protein HscA homolog from Colwellia psychrerythraea (strain 34H / ATCC BAA-681) (Vibrio psychroerythus).